A 164-amino-acid polypeptide reads, in one-letter code: Large ribosomal subunit protein eL24z (164 aa).

Residues 117-133 (ERIKKTKDEKKAKKVEY) are compositionally biased toward basic and acidic residues. The interval 117-164 (ERIKKTKDEKKAKKVEYASKQQKSQVKGNIPKSAAPKAAKMGGGGGRR) is disordered.

This sequence belongs to the eukaryotic ribosomal protein eL24 family. As to quaternary structure, interacts with the cauliflower mosaic virus transactivator TAV to form a TAV/60S complex. Interacts with REIL1 AND REIL2.

Might have an extraribosomal function in reinitiation of translation. This Arabidopsis thaliana (Mouse-ear cress) protein is Large ribosomal subunit protein eL24z (RPL24A).